A 74-amino-acid chain; its full sequence is Small ribosomal subunit protein bS18 (74 aa).

It belongs to the bacterial ribosomal protein bS18 family. As to quaternary structure, part of the 30S ribosomal subunit. Forms a tight heterodimer with protein bS6.

Functionally, binds as a heterodimer with protein bS6 to the central domain of the 16S rRNA, where it helps stabilize the platform of the 30S subunit. The protein is Small ribosomal subunit protein bS18 of Chlorobaculum tepidum (strain ATCC 49652 / DSM 12025 / NBRC 103806 / TLS) (Chlorobium tepidum).